Here is a 144-residue protein sequence, read N- to C-terminus: Large ribosomal subunit protein uL16 (144 aa).

It belongs to the universal ribosomal protein uL16 family. As to quaternary structure, part of the 50S ribosomal subunit.

Functionally, binds 23S rRNA and is also seen to make contacts with the A and possibly P site tRNAs. In Lysinibacillus sphaericus (strain C3-41), this protein is Large ribosomal subunit protein uL16.